A 255-amino-acid polypeptide reads, in one-letter code: Triosephosphate isomerase (255 aa).

9-11 (NWK) serves as a coordination point for substrate. Histidine 95 acts as the Electrophile in catalysis. Glutamate 167 functions as the Proton acceptor in the catalytic mechanism. Residues glycine 173, serine 212, and 233-234 (GG) each bind substrate.

It belongs to the triosephosphate isomerase family. Homodimer.

The protein localises to the cytoplasm. It catalyses the reaction D-glyceraldehyde 3-phosphate = dihydroxyacetone phosphate. The protein operates within carbohydrate biosynthesis; gluconeogenesis. It participates in carbohydrate degradation; glycolysis; D-glyceraldehyde 3-phosphate from glycerone phosphate: step 1/1. Functionally, involved in the gluconeogenesis. Catalyzes stereospecifically the conversion of dihydroxyacetone phosphate (DHAP) to D-glyceraldehyde-3-phosphate (G3P). In Pectobacterium atrosepticum (strain SCRI 1043 / ATCC BAA-672) (Erwinia carotovora subsp. atroseptica), this protein is Triosephosphate isomerase.